Reading from the N-terminus, the 334-residue chain is ADP-L-glycero-D-manno-heptose-6-epimerase (334 aa).

NADP(+)-binding positions include 11–12, 32–33, Lys39, Lys54, 77–81, and Asn94; these read FI, DN, and QGACS. Residue Tyr141 is the Proton acceptor of the active site. Lys145 contributes to the NADP(+) binding site. Asn171 lines the substrate pocket. Val172 and Lys180 together coordinate NADP(+). The Proton acceptor role is filled by Lys180. Substrate-binding positions include Arg182, His189, 203–206, Arg216, and Tyr295; that span reads FGSN.

It belongs to the NAD(P)-dependent epimerase/dehydratase family. HldD subfamily. As to quaternary structure, homopentamer. Requires NADP(+) as cofactor.

It carries out the reaction ADP-D-glycero-beta-D-manno-heptose = ADP-L-glycero-beta-D-manno-heptose. Its pathway is nucleotide-sugar biosynthesis; ADP-L-glycero-beta-D-manno-heptose biosynthesis; ADP-L-glycero-beta-D-manno-heptose from D-glycero-beta-D-manno-heptose 7-phosphate: step 4/4. Functionally, catalyzes the interconversion between ADP-D-glycero-beta-D-manno-heptose and ADP-L-glycero-beta-D-manno-heptose via an epimerization at carbon 6 of the heptose. This is ADP-L-glycero-D-manno-heptose-6-epimerase from Neisseria gonorrhoeae (strain ATCC 700825 / FA 1090).